We begin with the raw amino-acid sequence, 461 residues long: Histone acetyltransferase KAT5 (461 aa).

Residues 8-65 form the Tudor-knot domain; that stretch reads IEGCRLPVLRRNQDNEDEWPLAEILSVKDISGRKLFYVHYIDFNKRLDEWVTHERLDL. N6-acetyllysine is present on K52. Residues 70–168 form a disordered region; sequence FPKKEAKTPT…RMTGSLVSDR (99 aa). Phosphoserine occurs at positions 86 and 90. Over residues 90-100 the composition is skewed to basic and acidic residues; it reads SPEREVKRKVE. 4 positions are modified to N6-acetyllysine; by autocatalysis: K96, K98, K135, and K137. S147 is modified (phosphoserine). One can recognise an MYST-type HAT domain in the interval 175 to 452; sequence TRMKNIECIE…IDSKCLHFTP (278 aa). The segment at 208–233 adopts a C2HC MYST-type zinc-finger fold; sequence LYLCEFCLKYGRSLKCLQRHLTKCDL. The residue at position 275 (K275) is an N6-acetyllysine; by autocatalysis. Positions 316–461 are interaction with ATF2; that stretch reads ACILTLPPYQ…PKDWSKRGKW (146 aa). Acetyl-CoA contacts are provided by residues 318-320 and 325-331; these read ILT and QRRGYGK. E351 serves as the catalytic Proton donor/acceptor. Residues S355 and S364 each contribute to the acetyl-CoA site. A Glycyl lysine isopeptide (Lys-Gly) (interchain with G-Cter in SUMO1); alternate cross-link involves residue K378. K378 participates in a covalent cross-link: Glycyl lysine isopeptide (Lys-Gly) (interchain with G-Cter in SUMO2); alternate. K399 participates in a covalent cross-link: Glycyl lysine isopeptide (Lys-Gly) (interchain with G-Cter in SUMO1).

The protein belongs to the MYST (SAS/MOZ) family. In terms of assembly, component of the NuA4 histone acetyltransferase complex which contains the catalytic subunit KAT5/TIP60 and the subunits EP400, TRRAP/PAF400, BRD8/SMAP, EPC1, DMAP1/DNMAP1, RUVBL1/TIP49, RUVBL2, ING3, actin, ACTL6A/BAF53A, MORF4L1/MRG15, MORF4L2/MRGX, MRGBP, YEATS4/GAS41, VPS72/YL1 and MEAF6. KAT5/TIP60, EPC1, and ING3 together constitute a minimal HAT complex termed Piccolo NuA4. The NuA4 complex interacts with MYC. Interacts with ATM. Interacts with JADE1. Interacts with PLA2G4A/CPLA2, EDNRA and HDAC7. Interacts with the cytoplasmic tail of APP and APBB1/FE65. Interacts with TRIM24 and TRIM68. Forms a complex with SENP6 and UBE2I in response to UV irradiation. Identified in a complex with HINT1. Interacts with ATF2 and CUL3. Interacts with NR1D2 (via N-terminus). Component of a SWR1-like complex. Interacts with FOXP3. Interacts with ZBTB49. Interacts with SRF. Interacts with ATF3; promoting autoacetylation and deubiquitination by USP7. Interacts with EP300/p300; interaction promotes KAT5 autoacetylation. Interacts with PRKDC; interaction is impaired following KAT5 sumoylation. Interacts with GPR50. Post-translationally, phosphorylated on Ser-86 and Ser-90; enhanced during G2/M phase. The phosphorylated form has a higher activity. Phosphorylation at Ser-90 by CDK1 or CDK9 is a prerequisite for phosphorylation at Ser-86 by GSK3. Phosphorylation at Ser-86 by GSK3 (GSK3A or GSK3B) activates acetyltransferase and acyltransferase activities. Phosphorylation at Ser-90 by CDK9 promotes KAT5 recruitment to chromatin. Phosphorylation by VRK1 following DNA damage promotes KAT5 association with chromatin and histone acetyltransferase activity. Autoacetylated. Autoacetylation is required for histone acetyltransferase activity. Autoacetylation at Lys-275 is facilitated by interaction with EP300/p300: it prevents ubiquitination and subsequent degradation by the proteasome and promotes acetylation of target proteins. Deacetylated by HDAC3 and SIRT1. Deacetylation by HDAC3 promotes its ubiquitination and cytoplasmic localization. In terms of processing, sumoylated by UBE2I at Lys-378 and Lys-399, leading to increase of its histone acetyltransferase activity in UV-induced DNA damage response, as well as its translocation to nuclear bodies. Sumoylation with SUMO2 by PIAS4 at Lys-378 promotes repair of DNA double-strand breaks (DSBs) via homologous recombination (HR). Sumoylation by PIAS4 impairs interaction with PRKDC, inhibiting non-homologous end joining (NHEJ)-mediated repair of DSBs, thereby facilitating HR. Desumoylated by SENP3. Post-translationally, ubiquitinated by MDM2, leading to its proteasome-dependent degradation. Ubiquitination is prevented by autoacetylation at Lys-275. Ubiquitinated following deacetylation by HDAC3, leading to cytoplasmic localization. Deubiquitinated by USP7 following interaction with ATF3, promoting its stabilization.

The protein localises to the nucleus. It is found in the chromosome. It localises to the cytoplasm. The protein resides in the centromere. Its subcellular location is the kinetochore. The protein localises to the cytoskeleton. It is found in the spindle pole. It localises to the nucleolus. The protein resides in the perinuclear region. It catalyses the reaction L-lysyl-[histone] + acetyl-CoA = N(6)-acetyl-L-lysyl-[histone] + CoA + H(+). It carries out the reaction L-lysyl-[protein] + acetyl-CoA = N(6)-acetyl-L-lysyl-[protein] + CoA + H(+). The catalysed reaction is (2E)-butenoyl-CoA + L-lysyl-[protein] = N(6)-(2E)-butenoyl-L-lysyl-[protein] + CoA + H(+). The enzyme catalyses 2-hydroxyisobutanoyl-CoA + L-lysyl-[protein] = N(6)-(2-hydroxyisobutanoyl)-L-lysyl-[protein] + CoA + H(+). It catalyses the reaction (S)-lactoyl-CoA + L-lysyl-[protein] = N(6)-[(S)-lactoyl]-L-lysyl-[protein] + CoA + H(+). Acyltransferase and acetyltransferase activities are activated by phosphorylation and autoacetylation. Autoacetylation activates the histone acetyltransferase activity. Its function is as follows. Catalytic subunit of the NuA4 histone acetyltransferase complex, a multiprotein complex involved in transcriptional activation of select genes principally by acetylation of nucleosomal histones H2A and H4. Histone acetylation alters nucleosome-DNA interactions and promotes interaction of the modified histones with other proteins which positively regulate transcription. The NuA4 histone acetyltransferase complex is required for the activation of transcriptional programs associated with proto-oncogene mediated growth induction, tumor suppressor mediated growth arrest and replicative senescence, apoptosis, and DNA repair. The NuA4 complex plays a direct role in repair of DNA double-strand breaks (DSBs) by promoting homologous recombination (HR): the complex inhibits TP53BP1 binding to chromatin via MBTD1, which recognizes and binds histone H4 trimethylated at 'Lys-20' (H4K20me), and KAT5 that catalyzes acetylation of 'Lys-15' of histone H2A (H2AK15ac), thereby blocking the ubiquitination mark required for TP53BP1 localization at DNA breaks. Also involved in DSB repair by mediating acetylation of 'Lys-5' of histone H2AX (H2AXK5ac), promoting NBN/NBS1 assembly at the sites of DNA damage. The NuA4 complex plays a key role in hematopoietic stem cell maintenance and is required to maintain acetylated H2A.Z/H2AZ1 at MYC target genes. The NuA4 complex is also required for spermatid development by promoting acetylation of histones: histone hyperacetylation is required for histone replacement during the transition from round to elongating spermatids. Component of a SWR1-like complex that specifically mediates the removal of histone H2A.Z/H2AZ1 from the nucleosome. Also acetylates non-histone proteins, such as BMAL1, ATM, AURKB, CHKA, CGAS, ERCC4/XPF, LPIN1, TP53/p53, NDC80/HEC1, NR1D2, RAN, SOX4, FOXP3, SQSTM1, ULK1 and RUBCNL/Pacer. Directly acetylates and activates ATM. Promotes nucleotide excision repair (NER) by mediating acetylation of ERCC4/XPF, thereby promoting formation of the ERCC4-ERCC1 complex. Relieves NR1D2-mediated inhibition of APOC3 expression by acetylating NR1D2. Acts as a regulator of regulatory T-cells (Treg) by catalyzing FOXP3 acetylation, thereby promoting FOXP3 transcriptional repressor activity. Involved in skeletal myoblast differentiation by mediating acetylation of SOX4. Catalyzes acetylation of APBB1/FE65, increasing its transcription activator activity. Promotes transcription elongation during the activation phase of the circadian cycle by catalyzing acetylation of BMAL1, promoting elongation of circadian transcripts. Together with GSK3 (GSK3A or GSK3B), acts as a regulator of autophagy: phosphorylated at Ser-86 by GSK3 under starvation conditions, leading to activate acetyltransferase activity and promote acetylation of key autophagy regulators, such as ULK1 and RUBCNL/Pacer. Acts as a regulator of the cGAS-STING innate antiviral response by catalyzing acetylation the N-terminus of CGAS, thereby promoting CGAS DNA-binding and activation. Also regulates lipid metabolism by mediating acetylation of CHKA or LPIN1. Promotes lipolysis of lipid droplets following glucose deprivation by mediating acetylation of isoform 1 of CHKA, thereby promoting monomerization of CHKA and its conversion into a tyrosine-protein kinase. Acts as a regulator of fatty-acid-induced triacylglycerol synthesis by catalyzing acetylation of LPIN1, thereby promoting the synthesis of diacylglycerol. In addition to protein acetyltransferase, can use different acyl-CoA substrates, such as (2E)-butenoyl-CoA (crotonyl-CoA), S-lactoyl-CoA (lactyl-CoA) and 2-hydroxyisobutanoyl-CoA (2-hydroxyisobutyryl-CoA), and is able to mediate protein crotonylation, lactylation and 2-hydroxyisobutyrylation, respectively. Acts as a key regulator of chromosome segregation and kinetochore-microtubule attachment during mitosis by mediating acetylation or crotonylation of target proteins. Catalyzes acetylation of AURKB at kinetochores, increasing AURKB activity and promoting accurate chromosome segregation in mitosis. Acetylates RAN during mitosis, promoting microtubule assembly at mitotic chromosomes. Acetylates NDC80/HEC1 during mitosis, promoting robust kinetochore-microtubule attachment. Catalyzes crotonylation of MAPRE1/EB1, thereby ensuring accurate spindle positioning in mitosis. Catalyzes lactylation of NBN/NBS1 in response to DNA damage, thereby promoting DNA double-strand breaks (DSBs) via homologous recombination (HR). This chain is Histone acetyltransferase KAT5, found in Pongo abelii (Sumatran orangutan).